A 123-amino-acid chain; its full sequence is Protein Wnt-3b (123 aa).

A lipid anchor (O-palmitoleoyl serine; by PORCN) is attached at serine 1. Cysteine 89 and cysteine 104 are disulfide-bonded. Asparagine 90 is a glycosylation site (N-linked (GlcNAc...) asparagine).

This sequence belongs to the Wnt family. In terms of processing, palmitoleoylation is required for efficient binding to frizzled receptors. Depalmitoleoylation leads to Wnt signaling pathway inhibition.

The protein localises to the secreted. The protein resides in the extracellular space. Its subcellular location is the extracellular matrix. Ligand for members of the frizzled family of seven transmembrane receptors. Probable developmental protein. May be a signaling molecule which affects the development of discrete regions of tissues. Is likely to signal over only few cell diameters. This Meleagris gallopavo (Wild turkey) protein is Protein Wnt-3b (WNT3B).